The following is a 288-amino-acid chain: Shikimate dehydrogenase (NADP(+)) (288 aa).

Shikimate-binding positions include 15–17 (SKS) and Thr-64. Lys-68 (proton acceptor) is an active-site residue. An NADP(+)-binding site is contributed by Glu-83. Shikimate contacts are provided by Asn-92 and Asp-117. NADP(+) is bound by residues 141–145 (GAGGA), 165–170 (NRTLSK), and Met-232. A shikimate-binding site is contributed by Tyr-234. Gly-254 contributes to the NADP(+) binding site.

It belongs to the shikimate dehydrogenase family. As to quaternary structure, homodimer.

The enzyme catalyses shikimate + NADP(+) = 3-dehydroshikimate + NADPH + H(+). It participates in metabolic intermediate biosynthesis; chorismate biosynthesis; chorismate from D-erythrose 4-phosphate and phosphoenolpyruvate: step 4/7. Involved in the biosynthesis of the chorismate, which leads to the biosynthesis of aromatic amino acids. Catalyzes the reversible NADPH linked reduction of 3-dehydroshikimate (DHSA) to yield shikimate (SA). This is Shikimate dehydrogenase (NADP(+)) from Psychrobacter arcticus (strain DSM 17307 / VKM B-2377 / 273-4).